A 222-amino-acid chain; its full sequence is Large ribosomal subunit protein uL4 (222 aa).

A disordered region spans residues Ala42–Arg100. A compositionally biased stretch (basic residues) spans Gly60–Gly71.

Belongs to the universal ribosomal protein uL4 family. In terms of assembly, part of the 50S ribosomal subunit.

In terms of biological role, one of the primary rRNA binding proteins, this protein initially binds near the 5'-end of the 23S rRNA. It is important during the early stages of 50S assembly. It makes multiple contacts with different domains of the 23S rRNA in the assembled 50S subunit and ribosome. Forms part of the polypeptide exit tunnel. The sequence is that of Large ribosomal subunit protein uL4 from Thermobifida fusca (strain YX).